Here is a 278-residue protein sequence, read N- to C-terminus: 2,5-diketo-D-gluconic acid reductase A (278 aa).

Catalysis depends on tyrosine 50, which acts as the Proton donor. Histidine 108 contributes to the substrate binding site. Glycine 188 to asparagine 242 is a binding site for NADP(+). The segment at aspartate 259–aspartate 278 is disordered.

The protein belongs to the aldo/keto reductase family. Monomer.

Its subcellular location is the cytoplasm. It carries out the reaction 2-dehydro-L-idonate + NADP(+) = 2,5-didehydro-D-gluconate + NADPH + H(+). With respect to regulation, inhibited by Zn(2+), Fe(3+), Cu(2+) and Ni(2+). Catalyzes the reduction of 2,5-diketo-D-gluconic acid (25DKG) to 2-keto-L-gulonic acid (2KLG). 5-keto-D-fructose and dihydroxyacetone can also serve as substrates. 25DKGR-A exhibits a greater selectivity for the substrate and higher thermal stability than 25DKGR-B. This chain is 2,5-diketo-D-gluconic acid reductase A (dkgA), found in Corynebacterium sp. (strain ATCC 31090).